Reading from the N-terminus, the 431-residue chain is Serine hydroxymethyltransferase 2 (431 aa).

(6S)-5,6,7,8-tetrahydrofolate-binding positions include leucine 131 and 135-137 (GHL). The residue at position 240 (lysine 240) is an N6-(pyridoxal phosphate)lysine. (6S)-5,6,7,8-tetrahydrofolate is bound at residue glutamate 256.

Belongs to the SHMT family. As to quaternary structure, homodimer. Requires pyridoxal 5'-phosphate as cofactor.

Its subcellular location is the cytoplasm. It carries out the reaction (6R)-5,10-methylene-5,6,7,8-tetrahydrofolate + glycine + H2O = (6S)-5,6,7,8-tetrahydrofolate + L-serine. It functions in the pathway one-carbon metabolism; tetrahydrofolate interconversion. It participates in amino-acid biosynthesis; glycine biosynthesis; glycine from L-serine: step 1/1. Its function is as follows. Catalyzes the reversible interconversion of serine and glycine with tetrahydrofolate (THF) serving as the one-carbon carrier. This reaction serves as the major source of one-carbon groups required for the biosynthesis of purines, thymidylate, methionine, and other important biomolecules. Also exhibits THF-independent aldolase activity toward beta-hydroxyamino acids, producing glycine and aldehydes, via a retro-aldol mechanism. In Vibrio vulnificus (strain YJ016), this protein is Serine hydroxymethyltransferase 2.